A 129-amino-acid polypeptide reads, in one-letter code: Follitropin subunit beta (129 aa).

An N-terminal signal peptide occupies residues 1–20 (MKTVQFCFLFCCWKAICCNS). Disulfide bonds link Cys-21/Cys-69, Cys-35/Cys-84, Cys-38/Cys-122, Cys-46/Cys-100, Cys-50/Cys-102, and Cys-105/Cys-112. N-linked (GlcNAc...) asparagine glycans are attached at residues Asn-25 and Asn-42.

Belongs to the glycoprotein hormones subunit beta family. As to quaternary structure, heterodimer. The active follitropin is a heterodimer composed of an alpha chain/CGA shared with other hormones and a unique beta chain/FSHB shown here.

It localises to the secreted. Functionally, together with the alpha chain CGA constitutes follitropin, the follicle-stimulating hormone, and provides its biological specificity to the hormone heterodimer. Binds FSHR, a G protein-coupled receptor, on target cells to activate downstream signaling pathways. Follitropin is involved in follicle development and spermatogenesis in reproductive organs. The protein is Follitropin subunit beta (FSHB) of Saimiri boliviensis boliviensis (Bolivian squirrel monkey).